A 694-amino-acid chain; its full sequence is Ferric reductase transmembrane component 5 (694 aa).

A signal peptide spans 1 to 19; it reads MLFARLVLLLVYLAPGSLA. Residues 20–163 are Extracellular-facing; it reads KPASTKKRTQ…LDNIDKGNVY (144 aa). Residue Asn117 is glycosylated (N-linked (GlcNAc...) asparagine). Residues 164-184 traverse the membrane as a helical segment; that stretch reads GVTICLYWIGVLFIAAVYHFL. Topologically, residues 185-222 are cytoplasmic; that stretch reads NFSRLKQTVFKNKVSAFLRGHYVLPALVHNHAMSVGRW. Residues 223 to 243 traverse the membrane as a helical segment; it reads FFIGLVPTRLETLVLFGYVLL. Residues 244-267 are Extracellular-facing; that stretch reads HGFLLSSYNFDHNELLSDRRSQVL. Residues 268–288 form a helical membrane-spanning segment; it reads IFLSDRAGILAFAHFPLIVLF. Residues 274–408 form the Ferric oxidoreductase domain; the sequence is AGILAFAHFP…GWGEWIMACA (135 aa). The Cytoplasmic portion of the chain corresponds to 289–311; the sequence is GGKNSTMTWLTGIRYTAFITYHK. The heme site is built by His310 and His324. Residues 312 to 334 form a helical membrane-spanning segment; the sequence is WLGRFMLVDCTIHAIGYTYHAYI. Topologically, residues 335 to 347 are extracellular; it reads ENYWKYVKYSDLW. Residues 348-368 traverse the membrane as a helical segment; sequence TSGRHAMIIVGILVFFSFFFF. Residues 369-371 are Cytoplasmic-facing; sequence RRH. A helical membrane pass occupies residues 372-392; that stretch reads YYELFVITHIILAIGFFHACW. The heme site is built by His380 and His394. Topologically, residues 393–403 are extracellular; it reads KHCYKLGWGEW. A helical transmembrane segment spans residues 404 to 424; sequence IMACALFWIADRILRLIKIAI. The 120-residue stretch at 409 to 528 folds into the FAD-binding FR-type domain; sequence LFWIADRILR…EGPYGQSTRT (120 aa). At 425 to 694 the chain is on the cytoplasmic side; the sequence is FGMPWAKLKL…IEYVEEFQNW (270 aa). 473 to 479 contacts FAD; sequence HPFTVMD. NADP(+) is bound by residues 520 to 523 and 660 to 661; these read GPYG and CG.

Belongs to the ferric reductase (FRE) family. It depends on FAD as a cofactor.

Its subcellular location is the cell membrane. It carries out the reaction 2 a Fe(II)-siderophore + NADP(+) + H(+) = 2 a Fe(III)-siderophore + NADPH. Metalloreductase responsible for reducing extracellular iron and copper prior to import. Catalyzes the reductive uptake of Fe(3+)-salts and Fe(3+) bound to catecholate or hydroxamate siderophores. Fe(3+) is reduced to Fe(2+), which then dissociates from the siderophore and can be imported by the high-affinity Fe(2+) transport complex in the plasma membrane. In Saccharomyces cerevisiae (strain ATCC 204508 / S288c) (Baker's yeast), this protein is Ferric reductase transmembrane component 5 (FRE5).